The chain runs to 966 residues: LRR receptor-like serine/threonine-protein kinase ERL1 (966 aa).

The first 25 residues, Met-1–Ala-25, serve as a signal peptide directing secretion. Residues Met-26–Arg-582 are Extracellular-facing. The LRR 1 repeat unit spans residues Phe-40–Gly-63. Asn-68 and Asn-77 each carry an N-linked (GlcNAc...) asparagine glycan. 20 LRR repeats span residues Ser-75 to Leu-94, Arg-95 to Cys-118, Ser-120 to Leu-142, Lys-143 to Ile-166, Asn-168 to Asn-190, Val-192 to Leu-214, Thr-215 to Cys-238, Thr-239 to Phe-261, Leu-262 to Met-285, Gln-286 to Phe-311, Gly-313 to Met-333, Ser-334 to Leu-357, Gln-359 to Cys-381, Ala-383 to Asn-404, Leu-405 to Ile-429, Asn-431 to Leu-453, Glu-454 to Asn-476, Arg-478 to Gln-500, Leu-501 to Cys-525, and Thr-527 to Arg-550. N-linked (GlcNAc...) asparagine glycans are attached at residues Asn-226 and Asn-237. N-linked (GlcNAc...) asparagine glycans are attached at residues Asn-308 and Asn-332. An N-linked (GlcNAc...) asparagine glycan is attached at Asn-377. 3 N-linked (GlcNAc...) asparagine glycosylation sites follow: Asn-412, Asn-441, and Asn-460. N-linked (GlcNAc...) asparagine glycosylation is found at Asn-532, Asn-537, and Asn-547. A helical transmembrane segment spans residues Gly-583–Val-603. Over Tyr-604 to Ile-966 the chain is Cytoplasmic. Residues Thr-637 and Thr-645 each carry the phosphothreonine modification. The Protein kinase domain occupies Leu-648–Leu-921. Residues Ile-654 to Val-662 and Lys-676 contribute to the ATP site. A phosphotyrosine mark is found at Tyr-721 and Tyr-760. The active-site Proton acceptor is the Asp-773. Tyr-815 is subject to Phosphotyrosine. Thr-823 is subject to Phosphothreonine.

It belongs to the protein kinase superfamily. Ser/Thr protein kinase family. Homodimer and heterodimer with ERECTA and TMM. Interacts with EPF1 and EPF2. Interacts with SERK1, SERK2, SERK3/BAK1 and SERK4 in a EPF1-induced manner. In terms of tissue distribution, mostly expressed in developing organs, including bud clusters, flowers, siliques and young rosettes. Also detected in mature aboveground organs, such as leaves, stems and pedicels, but barely in roots.

The protein resides in the cell membrane. The catalysed reaction is L-seryl-[protein] + ATP = O-phospho-L-seryl-[protein] + ADP + H(+). The enzyme catalyses L-threonyl-[protein] + ATP = O-phospho-L-threonyl-[protein] + ADP + H(+). Functionally, receptor kinase that regulates inflorescence architecture and organ shape as well as stomatal patterning, including density and clustering, together with ER and ERL2. Redundantly involved with ER in procambial development regulation. Forms a functional ligand-receptor pair with EPF1 (AC Q8S8I4). Forms a constitutive complex with TMM involved in the recognition of the stomatal regulatory peptides EPF1, EPF2 and EPFL9/STOMAGEN. The protein is LRR receptor-like serine/threonine-protein kinase ERL1 of Arabidopsis thaliana (Mouse-ear cress).